Consider the following 188-residue polypeptide: GTPase KRas (188 aa).

GTP contacts are provided by residues Gly-10–Ala-18, Val-29–Thr-35, Ala-59–Gly-60, and Asn-116–Asp-119. Residues Tyr-32–Tyr-40 carry the Effector region motif. Positions Lys-167–Met-188 are disordered. A Cysteine methyl ester modification is found at Cys-185. Cys-185 carries S-farnesyl cysteine lipidation. Residues Val-186–Met-188 constitute a propeptide, removed in mature form.

This sequence belongs to the small GTPase superfamily. Ras family.

The protein resides in the cell membrane. The protein localises to the cytoplasm. It carries out the reaction GTP + H2O = GDP + phosphate + H(+). Alternates between an inactive form bound to GDP and an active form bound to GTP. Activated by a guanine nucleotide-exchange factor (GEF) and inactivated by a GTPase-activating protein (GAP). Ras proteins bind GDP/GTP and possess intrinsic GTPase activity. Plays an important role in the regulation of cell proliferation. May play a role in promoting oncogenic events by inducing transcriptional silencing of tumor suppressor genes (TSGs). The chain is GTPase KRas (kras) from Cyprinus carpio (Common carp).